A 196-amino-acid chain; its full sequence is Holliday junction branch migration complex subunit RuvA (196 aa).

The tract at residues 1 to 65 (MIGNLSGTVD…ENTTQLYGFI (65 aa)) is domain I. The interval 66 to 143 (NKEEQSCLRL…KLETNNNNFY (78 aa)) is domain II. Residues 144 to 147 (PINE) form a flexible linker region. Positions 147–196 (EDAVSALINLGYEKTKVYDTIKKYKPNLDTKDIIRTALKELSNYEIDIMQ) are domain III.

It belongs to the RuvA family. Homotetramer. Forms an RuvA(8)-RuvB(12)-Holliday junction (HJ) complex. HJ DNA is sandwiched between 2 RuvA tetramers; dsDNA enters through RuvA and exits via RuvB. An RuvB hexamer assembles on each DNA strand where it exits the tetramer. Each RuvB hexamer is contacted by two RuvA subunits (via domain III) on 2 adjacent RuvB subunits; this complex drives branch migration. In the full resolvosome a probable DNA-RuvA(4)-RuvB(12)-RuvC(2) complex forms which resolves the HJ.

It localises to the cytoplasm. In terms of biological role, the RuvA-RuvB-RuvC complex processes Holliday junction (HJ) DNA during genetic recombination and DNA repair, while the RuvA-RuvB complex plays an important role in the rescue of blocked DNA replication forks via replication fork reversal (RFR). RuvA specifically binds to HJ cruciform DNA, conferring on it an open structure. The RuvB hexamer acts as an ATP-dependent pump, pulling dsDNA into and through the RuvAB complex. HJ branch migration allows RuvC to scan DNA until it finds its consensus sequence, where it cleaves and resolves the cruciform DNA. The chain is Holliday junction branch migration complex subunit RuvA from Wolbachia sp. subsp. Brugia malayi (strain TRS).